The sequence spans 288 residues: Shikimate dehydrogenase (NADP(+)) (288 aa).

Shikimate contacts are provided by residues 14–16 (SIS) and threonine 63. The Proton acceptor role is filled by lysine 67. Glutamate 79 serves as a coordination point for NADP(+). Shikimate is bound by residues asparagine 88 and aspartate 103. NADP(+)-binding positions include 127–131 (GSGGA), 151–156 (NRTYEK), and methionine 219. Position 221 (tyrosine 221) interacts with shikimate. Glycine 242 provides a ligand contact to NADP(+).

It belongs to the shikimate dehydrogenase family. Homodimer.

It catalyses the reaction shikimate + NADP(+) = 3-dehydroshikimate + NADPH + H(+). Its pathway is metabolic intermediate biosynthesis; chorismate biosynthesis; chorismate from D-erythrose 4-phosphate and phosphoenolpyruvate: step 4/7. Functionally, involved in the biosynthesis of the chorismate, which leads to the biosynthesis of aromatic amino acids. Catalyzes the reversible NADPH linked reduction of 3-dehydroshikimate (DHSA) to yield shikimate (SA). This chain is Shikimate dehydrogenase (NADP(+)), found in Caldicellulosiruptor bescii (strain ATCC BAA-1888 / DSM 6725 / KCTC 15123 / Z-1320) (Anaerocellum thermophilum).